A 122-amino-acid chain; its full sequence is Large ribosomal subunit protein uL14c (122 aa).

It belongs to the universal ribosomal protein uL14 family. As to quaternary structure, part of the 50S ribosomal subunit.

The protein localises to the plastid. It is found in the chloroplast. Its function is as follows. Binds to 23S rRNA. This Ipomoea purpurea (Common morning glory) protein is Large ribosomal subunit protein uL14c.